A 420-amino-acid polypeptide reads, in one-letter code: UDP-N-acetylglucosamine 1-carboxyvinyltransferase 1 (420 aa).

A phosphoenolpyruvate-binding site is contributed by Lys22–Asn23. Arg91 serves as a coordination point for UDP-N-acetyl-alpha-D-glucosamine. Cys115 (proton donor) is an active-site residue. Cys115 bears the 2-(S-cysteinyl)pyruvic acid O-phosphothioketal mark. UDP-N-acetyl-alpha-D-glucosamine is bound by residues Arg120–Leu124, Asp303, and Val325.

Belongs to the EPSP synthase family. MurA subfamily.

The protein resides in the cytoplasm. It carries out the reaction phosphoenolpyruvate + UDP-N-acetyl-alpha-D-glucosamine = UDP-N-acetyl-3-O-(1-carboxyvinyl)-alpha-D-glucosamine + phosphate. Its pathway is cell wall biogenesis; peptidoglycan biosynthesis. Its function is as follows. Cell wall formation. Adds enolpyruvyl to UDP-N-acetylglucosamine. In Carboxydothermus hydrogenoformans (strain ATCC BAA-161 / DSM 6008 / Z-2901), this protein is UDP-N-acetylglucosamine 1-carboxyvinyltransferase 1.